We begin with the raw amino-acid sequence, 393 residues long: Cysteine desulfurase (393 aa).

Residues 76-77, asparagine 155, glutamine 183, and 203-205 each bind pyridoxal 5'-phosphate; these read GT and SAH. Lysine 206 is modified (N6-(pyridoxal phosphate)lysine). A pyridoxal 5'-phosphate-binding site is contributed by threonine 241. Cysteine 328 acts as the Cysteine persulfide intermediate in catalysis. Cysteine 328 serves as a coordination point for [2Fe-2S] cluster.

Belongs to the class-V pyridoxal-phosphate-dependent aminotransferase family. NifS/IscS subfamily. Homodimer. Pyridoxal 5'-phosphate is required as a cofactor.

It carries out the reaction (sulfur carrier)-H + L-cysteine = (sulfur carrier)-SH + L-alanine. Catalyzes the removal of elemental sulfur atoms from cysteine to produce alanine. Seems to participate in the biosynthesis of the nitrogenase metalloclusters by providing the inorganic sulfur required for the Fe-S core formation. In Bradyrhizobium diazoefficiens (strain JCM 10833 / BCRC 13528 / IAM 13628 / NBRC 14792 / USDA 110), this protein is Cysteine desulfurase.